We begin with the raw amino-acid sequence, 397 residues long: Mannitol-1-phosphate 5-dehydrogenase (397 aa).

NAD(+) is bound at residue A9–G20. K220 is an active-site residue.

The protein belongs to the mannitol dehydrogenase family. In terms of assembly, monomer.

The catalysed reaction is D-mannitol 1-phosphate + NAD(+) = beta-D-fructose 6-phosphate + NADH + H(+). Functionally, catalyzes the NAD(H)-dependent interconversion of D-fructose 6-phosphate and D-mannitol 1-phosphate in the mannitol metabolic pathway. This is Mannitol-1-phosphate 5-dehydrogenase from Podospora anserina (strain S / ATCC MYA-4624 / DSM 980 / FGSC 10383) (Pleurage anserina).